The following is a 571-amino-acid chain: Urease subunit alpha (571 aa).

A Urease domain is found at G133–F571. Ni(2+) contacts are provided by H138, H140, and K221. K221 is modified (N6-carboxylysine). H223 contributes to the substrate binding site. Positions 250 and 276 each coordinate Ni(2+). Residue H324 is the Proton donor of the active site. D364 contacts Ni(2+).

This sequence belongs to the metallo-dependent hydrolases superfamily. Urease alpha subunit family. Heterotrimer of UreA (gamma), UreB (beta) and UreC (alpha) subunits. Three heterotrimers associate to form the active enzyme. It depends on Ni cation as a cofactor. Post-translationally, carboxylation allows a single lysine to coordinate two nickel ions.

It is found in the cytoplasm. The enzyme catalyses urea + 2 H2O + H(+) = hydrogencarbonate + 2 NH4(+). It participates in nitrogen metabolism; urea degradation; CO(2) and NH(3) from urea (urease route): step 1/1. The polypeptide is Urease subunit alpha (Staphylococcus saprophyticus subsp. saprophyticus (strain ATCC 15305 / DSM 20229 / NCIMB 8711 / NCTC 7292 / S-41)).